The following is a 367-amino-acid chain: Queuine tRNA-ribosyltransferase (367 aa).

Residue Asp89 is the Proton acceptor of the active site. Substrate-binding positions include 89-93 (DSGGF), Asp143, Gln185, and Gly212. The segment at 243–249 (GVGTPSD) is RNA binding. The Nucleophile role is filled by Asp262. Positions 267–271 (TRNAR) are RNA binding; important for wobble base 34 recognition. 4 residues coordinate Zn(2+): Cys300, Cys302, Cys305, and His331.

This sequence belongs to the queuine tRNA-ribosyltransferase family. Homodimer. Within each dimer, one monomer is responsible for RNA recognition and catalysis, while the other monomer binds to the replacement base PreQ1. Zn(2+) is required as a cofactor.

It catalyses the reaction 7-aminomethyl-7-carbaguanine + guanosine(34) in tRNA = 7-aminomethyl-7-carbaguanosine(34) in tRNA + guanine. Its pathway is tRNA modification; tRNA-queuosine biosynthesis. In terms of biological role, catalyzes the base-exchange of a guanine (G) residue with the queuine precursor 7-aminomethyl-7-deazaguanine (PreQ1) at position 34 (anticodon wobble position) in tRNAs with GU(N) anticodons (tRNA-Asp, -Asn, -His and -Tyr). Catalysis occurs through a double-displacement mechanism. The nucleophile active site attacks the C1' of nucleotide 34 to detach the guanine base from the RNA, forming a covalent enzyme-RNA intermediate. The proton acceptor active site deprotonates the incoming PreQ1, allowing a nucleophilic attack on the C1' of the ribose to form the product. After dissociation, two additional enzymatic reactions on the tRNA convert PreQ1 to queuine (Q), resulting in the hypermodified nucleoside queuosine (7-(((4,5-cis-dihydroxy-2-cyclopenten-1-yl)amino)methyl)-7-deazaguanosine). The sequence is that of Queuine tRNA-ribosyltransferase from Thiobacillus denitrificans (strain ATCC 25259 / T1).